The chain runs to 461 residues: UDP-glucosyltransferase 1 (461 aa).

Belongs to the UDP-glycosyltransferase family.

It participates in secondary metabolite biosynthesis. Its function is as follows. UDP-glucosyltransferase; part of the pathway that mediates the biosynthesis of tenellin-type 2-pyridones, iron-chelating compounds involved in iron stress tolerance, competition with the natural competitor fungus Metarhizium robertsii and insect hosts infection. Targets the N-OH hydroxyl residue of 15-hydroxytellenin (15-HT) to produce pyridovericin-N-O-(beta-D-glucopyranoside) which is further methylated by the methyltransferase MT1 to yield pyridovericin-N-O-(4-O-methyl-beta-D-glucopyranoside) (PMGP). The pathway begins with the assembly of the polyketide-amino acid backbone by the hybrid PKS-NRPS tenS with the help of the enoyl reductase tenC. These enzymes catalyze the synthesis of the pyrrolidine-2-dione intermediates pretellinin A, 11-hydropretellenin A, 12-hydropretellenin A, 13-hydropretellenin A, 14-hydropretellenin A, 12-oxopretellenin A and prototellinin D. The cytochrome P450 monooxygenase tenA then catalyzes an oxidative ring expansion of pretenellin A and 14-hydropretellenin A to form the 2-pyridone core, leading to pretenellin B and pyridovericin, respectively. The cytochrome P450 monooxygenase tenB is then required for the selective N-hydroxylation of the 2-pyridone nitrogen of yield tellinin and 15-hydroxytellenin (15-HT), respectively. The UDP-glucosyltransferase GT1 and the methyltransferase MT1, located outside the tenS gene cluster, contribute to the stepwise glycosylation and methylation of 15-HT to obtain the glycoside pyridovericin-N-O-(4-O-methyl-beta-D-glucopyranoside) (PMGP). Additional related compounds such as 1-O-methyl-15-HT, (8Z)-1-O-methyl-15-HT, and O-methyltenellin A are also produced but the enzymes involved in their biosynthesis have still to be determined. The protein is UDP-glucosyltransferase 1 of Beauveria bassiana (strain ARSEF 2860) (White muscardine disease fungus).